Here is a 523-residue protein sequence, read N- to C-terminus: MFTKSVEVLDTTLRDGAQTANISFTLNDKIRIALLLDELGVDYIEGGWPSSNPKDEEFFKEIKKYKLTKARIAAFGSTRKKESTAKEDQSLNSIIKADVDVGVLFGKSWSLHVTDVLKISLEENLDIIYDSVNYLKSHGLRVVYDAEHFYQGYKENREYALKAVKTAEEAGADVIVLCDTNGGTLPHEVYNITKDVVNHVKVKIGLHMHNDSGGAVANTVMGVVAGARHVQGTINGIGERTGNADLIQVIPNIMLKLGLNSLKGNESLKKLKEVSRVVYEIIGVHPNPYQPYVGDFAFTHKAGVHADAVMKVTRAYEHIDPTLVGNNRRFVISEVAGSSNVIYYLEKLGIKVDKKDPRVRNAVQRIKELENRGYSFDLAPASAVLVALRDLGMYRDLIKVEYWKVMNEKELAIAIVKVNGQLEVAEGVGPVHSVDIALRKALQKVYPQINKVKLTDYRVILPGEIKNTESVVRVTIEFTDGEKNWRTEGVSTSVIEASVIALIDGLDYYLQTEKLIKSEVINN.

Residues 6 to 272 (VEVLDTTLRD…KGNESLKKLK (267 aa)) form the Pyruvate carboxyltransferase domain.

Belongs to the alpha-IPM synthase/homocitrate synthase family.

The catalysed reaction is pyruvate + acetyl-CoA + H2O = (3R)-citramalate + CoA + H(+). The protein operates within amino-acid biosynthesis; L-isoleucine biosynthesis; 2-oxobutanoate from pyruvate: step 1/3. Inhibited by isoleucine. Catalyzes the condensation of pyruvate and acetyl-coenzyme A to form (R)-citramalate. Makes part of a pathway for isoleucine biosynthesis, i.e. the citramalate-dependent pathway. Also displays a low alpha-isopropylmalate synthase activity, using 2-oxoisovalerate as substrate, but is unable to use 2-oxoglutarate. This chain is (R)-citramalate synthase, found in Sulfolobus acidocaldarius (strain ATCC 33909 / DSM 639 / JCM 8929 / NBRC 15157 / NCIMB 11770).